We begin with the raw amino-acid sequence, 153 residues long: Prostaglandin E synthase (153 aa).

The Lumenal segment spans residues 1-13 (MPPPSLAMVSGQA). The chain crosses the membrane as a helical span at residues 14–42 (LPAFLLCSTLLVIKMYAVAVITGQVRLRK). Arg39 lines the glutathione pocket. Over 43–61 (KAFANPEDALRHGGLQFHR) the chain is Cytoplasmic. The helical transmembrane segment at 62–91 (DDQDVERCLRAHRNDMETIYPFLFLGLVYS) threads the bilayer. 74–78 (RNDME) provides a ligand contact to glutathione. Residues 92 to 96 (FLGPD) are Lumenal-facing. A helical transmembrane segment spans residues 97 to 120 (PFVAQMHFLVFFLGRMVHTVAYLG). Positions 114 and 118 each coordinate glutathione. The Cytoplasmic portion of the chain corresponds to 121–124 (KLRA). A helical transmembrane segment spans residues 125-153 (PTRSLAYTVAQLPCASMALQIVWEAARHL). 127–131 (RSLAY) is a binding site for glutathione.

It belongs to the MAPEG family. As to quaternary structure, homotrimer. The cofactor is glutathione.

The protein localises to the membrane. Its subcellular location is the cytoplasm. The protein resides in the perinuclear region. The catalysed reaction is prostaglandin H2 = prostaglandin E2. The enzyme catalyses 2-glyceryl-prostaglandin H2 = 2-glyceryl-prostaglandin E2. It carries out the reaction prostaglandin G2 = (15S)-15-hydroperoxy-prostaglandin E2. It catalyses the reaction 1-chloro-2,4-dinitrobenzene + glutathione = 2,4-dinitrophenyl-S-glutathione + chloride + H(+). The catalysed reaction is (5S)-hydroperoxy-(6E,8Z,11Z,14Z)-eicosatetraenoate + 2 glutathione = (5S)-hydroxy-(6E,8Z,11Z,14Z)-eicosatetraenoate + glutathione disulfide + H2O. It participates in lipid metabolism; prostaglandin biosynthesis. Functionally, terminal enzyme of the cyclooxygenase (COX)-2-mediated prostaglandin E2 (PGE2) biosynthetic pathway. Catalyzes the glutathione-dependent oxidoreduction of prostaglandin endoperoxide H2 (PGH2) to prostaglandin E2 (PGE2) in response to inflammatory stimuli. Plays a key role in inflammation response, fever and pain. Also catalyzes the oxidoreduction of endocannabinoids into prostaglandin glycerol esters and PGG2 into 15-hydroperoxy-PGE2. In addition, displays low glutathione transferase and glutathione-dependent peroxidase activities, toward 1-chloro-2,4-dinitrobenzene and 5-hydroperoxyicosatetraenoic acid (5-HPETE), respectively. The protein is Prostaglandin E synthase (PTGES) of Equus caballus (Horse).